A 96-amino-acid polypeptide reads, in one-letter code: MNSRMRRWAATSRLLHEDPPATPPSQDQQAEVLRRDIHILNAKISELENQMERLCRSLESTFNRIELLHSMLAQGEEEEEEEDGAEDIEENGEESD.

Disordered stretches follow at residues 1-29 and 72-96; these read MNSRMRRWAATSRLLHEDPPATPPSQDQQ and LAQGEEEEEEEDGAEDIEENGEESD. The segment covering 75–96 has biased composition (acidic residues); that stretch reads GEEEEEEEDGAEDIEENGEESD.

The polypeptide is Early E1A 11 kDa protein (Murine adenovirus A serotype 1 (MAdV-1)).